Consider the following 264-residue polypeptide: Ion-translocating oxidoreductase complex subunit B (264 aa).

A helical transmembrane segment spans residues 5 to 25; sequence LINSIAVLAGLGFAVGVMLVI. The region spanning 33-92 is the 4Fe-4S domain; sequence DSNPLIDDVASLLPGANCGGCGFAGCAACAEAIVEQGAPVNSCPVGGFEVAKQIGALLGQ. Residues cysteine 50, cysteine 53, cysteine 58, cysteine 75, cysteine 138, cysteine 142, cysteine 148, cysteine 152, cysteine 172, cysteine 175, cysteine 178, cysteine 182, cysteine 217, cysteine 220, cysteine 223, cysteine 227, cysteine 246, cysteine 249, cysteine 252, and cysteine 256 each contribute to the [4Fe-4S] cluster site. 4Fe-4S ferredoxin-type domains are found at residues 127-162, 163-192, 207-236, and 237-264; these read VALM…MGED, GFPV…FARD, KDVK…RVTE, and FLAE…IELR.

This sequence belongs to the 4Fe4S bacterial-type ferredoxin family. RnfB subfamily. As to quaternary structure, the Rnf complex is probably composed of eight subunits, including RnfA, RnfB, RnfC, RnfD, RnfE and RnfG. It depends on [4Fe-4S] cluster as a cofactor.

Its subcellular location is the cell membrane. Functionally, part of a membrane-bound complex that couples electron transfer with translocation of ions across the membrane. Catalyzes Na(+) transport, most probably coupled to electron transfer from reduced ferredoxin to methanophenazine and heterodisulfide reductase. Involved in heterodisulfide reduction during methanogenesis from acetate. This is Ion-translocating oxidoreductase complex subunit B from Methanosarcina acetivorans (strain ATCC 35395 / DSM 2834 / JCM 12185 / C2A).